Here is a 308-residue protein sequence, read N- to C-terminus: MNQTTIKKSIACSGVGLHSGKTVRMVLHPAAEDTGIVFDIHTAQGVRRIAPEPQVVIATGLATTLGMDGASVATVEHLLAAIRGLEIDNITVEIEGGEVPIMDGSAASFVMLLRNAGIRRQTSARKVFRIARPVHYERDGKSIRALPYDGFRVEYRIEFPHPLIGRQTLSIDITPESFGEIAKARTFGFLREVEYLHSKGLALGGSLDNAIVLDDYSVLNPDGLRSPDEFVRHKVLDFVGDMAMMGVPLQGHFIVECSGHALNNGFLRMLEENASLYLEAVELPVAEQHPAALRPAARVATEGQPAIA.

3 residues coordinate Zn(2+): His77, His233, and Asp237. His260 acts as the Proton donor in catalysis.

It belongs to the LpxC family. Zn(2+) serves as cofactor.

The catalysed reaction is a UDP-3-O-[(3R)-3-hydroxyacyl]-N-acetyl-alpha-D-glucosamine + H2O = a UDP-3-O-[(3R)-3-hydroxyacyl]-alpha-D-glucosamine + acetate. The protein operates within glycolipid biosynthesis; lipid IV(A) biosynthesis; lipid IV(A) from (3R)-3-hydroxytetradecanoyl-[acyl-carrier-protein] and UDP-N-acetyl-alpha-D-glucosamine: step 2/6. Its function is as follows. Catalyzes the hydrolysis of UDP-3-O-myristoyl-N-acetylglucosamine to form UDP-3-O-myristoylglucosamine and acetate, the committed step in lipid A biosynthesis. This chain is UDP-3-O-acyl-N-acetylglucosamine deacetylase, found in Nitratidesulfovibrio vulgaris (strain ATCC 29579 / DSM 644 / CCUG 34227 / NCIMB 8303 / VKM B-1760 / Hildenborough) (Desulfovibrio vulgaris).